We begin with the raw amino-acid sequence, 223 residues long: Endonuclease NucS (223 aa).

This sequence belongs to the NucS endonuclease family.

The protein localises to the cytoplasm. Cleaves both 3' and 5' ssDNA extremities of branched DNA structures. In Mycolicibacterium vanbaalenii (strain DSM 7251 / JCM 13017 / BCRC 16820 / KCTC 9966 / NRRL B-24157 / PYR-1) (Mycobacterium vanbaalenii), this protein is Endonuclease NucS.